Reading from the N-terminus, the 397-residue chain is Multidrug efflux pump subunit AcrA (397 aa).

A signal peptide spans 1-24; it reads MNKNRGFTPLAVVLMLSGSLALTG. Cys-25 carries N-palmitoyl cysteine lipidation. Cys-25 carries the S-diacylglycerol cysteine lipid modification. Residues 98-172 adopt a coiled-coil conformation; it reads PATYQATYDS…AVETARINLA (75 aa). Residues 377–397 are disordered; that stretch reads EVTADNNQQAASGAQPEQSKS. A compositionally biased stretch (polar residues) spans 379–397; that stretch reads TADNNQQAASGAQPEQSKS.

This sequence belongs to the membrane fusion protein (MFP) (TC 8.A.1) family. In terms of assembly, monomeric in solution. Homotrimeric; interacts independently with AcrB and TolC as well as AcrZ. Part of the AcrA-AcrB-TolC efflux pump.

It is found in the cell inner membrane. In terms of biological role, acrA-AcrB-AcrZ-TolC is a drug efflux protein complex with broad substrate specificity that uses the proton motive force to export substrates. This subunit may act as an adapter protein that links AcrB and TolC stably together. In Escherichia coli O157:H7, this protein is Multidrug efflux pump subunit AcrA (acrA).